A 234-amino-acid polypeptide reads, in one-letter code: Opacity protein V28 (234 aa).

A1 is a signal peptide.

This sequence belongs to the opacity porin family.

Its subcellular location is the cell outer membrane. Its function is as follows. Implicated in a number of adherence functions. OPA proteins are implicated in pathogenesis and are subject to phase variation. The protein is Opacity protein V28 of Neisseria gonorrhoeae.